The primary structure comprises 419 residues: GTPase Obg (419 aa).

An Obg domain is found at 1–156 (MRFVDYVSIE…FYLDLQLKVM (156 aa)). The OBG-type G domain occupies 157 to 334 (ADIGLVGKPN…LEEKQKKLEI (178 aa)). GTP contacts are provided by residues 163 to 170 (GKPNAGKS), 188 to 192 (FTTLV), 209 to 212 (DLPG), 278 to 281 (NKCD), and 315 to 317 (NII). The Mg(2+) site is built by Ser170 and Thr190. Residues 342–419 (IEFNLKAPFL…RIYEFEFHWN (78 aa)) enclose the OCT domain.

It belongs to the TRAFAC class OBG-HflX-like GTPase superfamily. OBG GTPase family. Monomer. It depends on Mg(2+) as a cofactor.

The protein localises to the cytoplasm. In terms of biological role, an essential GTPase which binds GTP, GDP and possibly (p)ppGpp with moderate affinity, with high nucleotide exchange rates and a fairly low GTP hydrolysis rate. Plays a role in control of the cell cycle, stress response, ribosome biogenesis and in those bacteria that undergo differentiation, in morphogenesis control. This chain is GTPase Obg, found in Mesomycoplasma hyopneumoniae (strain 232) (Mycoplasma hyopneumoniae).